The following is a 257-amino-acid chain: uncharacterized protein (257 aa).

This is an uncharacterized protein from Mycobacterium tuberculosis (strain CDC 1551 / Oshkosh).